Here is a 340-residue protein sequence, read N- to C-terminus: UDP-3-O-acylglucosamine N-acyltransferase (340 aa).

His240 (proton acceptor) is an active-site residue.

This sequence belongs to the transferase hexapeptide repeat family. LpxD subfamily. As to quaternary structure, homotrimer.

The catalysed reaction is a UDP-3-O-[(3R)-3-hydroxyacyl]-alpha-D-glucosamine + a (3R)-hydroxyacyl-[ACP] = a UDP-2-N,3-O-bis[(3R)-3-hydroxyacyl]-alpha-D-glucosamine + holo-[ACP] + H(+). The protein operates within bacterial outer membrane biogenesis; LPS lipid A biosynthesis. Catalyzes the N-acylation of UDP-3-O-acylglucosamine using 3-hydroxyacyl-ACP as the acyl donor. Is involved in the biosynthesis of lipid A, a phosphorylated glycolipid that anchors the lipopolysaccharide to the outer membrane of the cell. This Pseudoalteromonas translucida (strain TAC 125) protein is UDP-3-O-acylglucosamine N-acyltransferase.